We begin with the raw amino-acid sequence, 592 residues long: Frizzled-5 (592 aa).

A signal peptide spans methionine 1 to serine 38. At alanine 39–tryptophan 248 the chain is on the extracellular side. Positions serine 40–arginine 161 constitute an FZ domain. Cystine bridges form between cysteine 45/cysteine 106, cysteine 53/cysteine 99, cysteine 90/cysteine 128, cysteine 117/cysteine 158, and cysteine 121/cysteine 145. The tract at residues asparagine 162–proline 192 is disordered. Residues isoleucine 249–isoleucine 269 form a helical membrane-spanning segment. Over aspartate 270 to proline 280 the chain is Cytoplasmic. A helical transmembrane segment spans residues isoleucine 281–alanine 301. Over glycine 302–cysteine 327 the chain is Extracellular. Residues threonine 328 to leucine 348 traverse the membrane as a helical segment. At serine 349 to glutamine 370 the chain is on the cytoplasmic side. Residues tyrosine 371–serine 391 traverse the membrane as a helical segment. Residues serine 392 to glycine 414 are Extracellular-facing. A helical membrane pass occupies residues phenylalanine 415–phenylalanine 435. The Cytoplasmic segment spans residues valine 436 to arginine 461. Residues isoleucine 462–tyrosine 482 traverse the membrane as a helical segment. The Extracellular portion of the chain corresponds to glutamate 483–alanine 512. Residues valine 513 to tryptophan 533 form a helical membrane-spanning segment. The Cytoplasmic portion of the chain corresponds to serine 534 to valine 592.

This sequence belongs to the G-protein coupled receptor Fz/Smo family.

It localises to the cell membrane. Its subcellular location is the golgi apparatus membrane. The protein localises to the synapse. It is found in the perikaryon. The protein resides in the cell projection. It localises to the dendrite. Its subcellular location is the axon. Receptor for Wnt proteins. Following binding, activates the canonical Wnt/beta-catenin signaling pathway. Also activates wnt non-canonical signaling. In neurons, activation of the Wnt pathway promotes formation of synapses. May be involved in transduction and intercellular transmission of polarity information during tissue morphogenesis and/or in differentiated tissues. Plays a role in early eye development, possibly through wnt non-canonical signaling. As a receptor for wnt11, promotes eye formation, at least partially, by antagonizing the Wnt/beta-catenin pathway. In addition, promotes coherence of eye field cells, potentially contributing to the coordinated morphogenetic behaviors of cells in the nascent eye field. This chain is Frizzled-5 (fzd5), found in Danio rerio (Zebrafish).